Here is a 567-residue protein sequence, read N- to C-terminus: Dihydroxy-acid dehydratase (567 aa).

[2Fe-2S] cluster is bound at residue cysteine 52. Aspartate 84 contributes to the Mg(2+) binding site. Cysteine 125 contributes to the [2Fe-2S] cluster binding site. The Mg(2+) site is built by aspartate 126 and lysine 127. Lysine 127 is subject to N6-carboxylysine. Residue cysteine 197 participates in [2Fe-2S] cluster binding. Residue glutamate 448 coordinates Mg(2+). The active-site Proton acceptor is the serine 474.

This sequence belongs to the IlvD/Edd family. As to quaternary structure, homodimer. [2Fe-2S] cluster serves as cofactor. The cofactor is Mg(2+).

It carries out the reaction (2R)-2,3-dihydroxy-3-methylbutanoate = 3-methyl-2-oxobutanoate + H2O. The enzyme catalyses (2R,3R)-2,3-dihydroxy-3-methylpentanoate = (S)-3-methyl-2-oxopentanoate + H2O. It participates in amino-acid biosynthesis; L-isoleucine biosynthesis; L-isoleucine from 2-oxobutanoate: step 3/4. Its pathway is amino-acid biosynthesis; L-valine biosynthesis; L-valine from pyruvate: step 3/4. Its function is as follows. Functions in the biosynthesis of branched-chain amino acids. Catalyzes the dehydration of (2R,3R)-2,3-dihydroxy-3-methylpentanoate (2,3-dihydroxy-3-methylvalerate) into 2-oxo-3-methylpentanoate (2-oxo-3-methylvalerate) and of (2R)-2,3-dihydroxy-3-methylbutanoate (2,3-dihydroxyisovalerate) into 2-oxo-3-methylbutanoate (2-oxoisovalerate), the penultimate precursor to L-isoleucine and L-valine, respectively. In Streptococcus pneumoniae (strain CGSP14), this protein is Dihydroxy-acid dehydratase.